The primary structure comprises 386 residues: Succinate--CoA ligase [ADP-forming] subunit beta (386 aa).

The ATP-grasp domain maps to 9 to 244 (KAVLRSYGVS…LDEEDSKEIE (236 aa)). Residues Lys46, 53–55 (GRG), Glu99, Cys102, and Glu107 each bind ATP. The Mg(2+) site is built by Asn199 and Asp213. Substrate is bound by residues Asn264 and 321-323 (GIM).

The protein belongs to the succinate/malate CoA ligase beta subunit family. As to quaternary structure, heterotetramer of two alpha and two beta subunits. Mg(2+) is required as a cofactor.

The catalysed reaction is succinate + ATP + CoA = succinyl-CoA + ADP + phosphate. It carries out the reaction GTP + succinate + CoA = succinyl-CoA + GDP + phosphate. The protein operates within carbohydrate metabolism; tricarboxylic acid cycle; succinate from succinyl-CoA (ligase route): step 1/1. Its function is as follows. Succinyl-CoA synthetase functions in the citric acid cycle (TCA), coupling the hydrolysis of succinyl-CoA to the synthesis of either ATP or GTP and thus represents the only step of substrate-level phosphorylation in the TCA. The beta subunit provides nucleotide specificity of the enzyme and binds the substrate succinate, while the binding sites for coenzyme A and phosphate are found in the alpha subunit. The protein is Succinate--CoA ligase [ADP-forming] subunit beta of Bacillus cereus (strain G9842).